The chain runs to 538 residues: Interleukin-21 receptor (538 aa).

The signal sequence occupies residues M1–G19. 3 cysteine pairs are disulfide-bonded: C20-C109, C25-C35, and C65-C81. Topologically, residues C20–E232 are extracellular. Fibronectin type-III domains are found at residues P21–I118 and K119–E228. N-linked (GlcNAc...) asparagine glycosylation is found at N73, N97, N104, N125, and N135. A C-linked (Man) tryptophan glycan is attached at W214. Residues W214–S218 carry the WSXWS motif motif. The helical transmembrane segment at G233–W253 threads the bilayer. Topologically, residues S254–S538 are cytoplasmic. The short motif at K266–E274 is the Box 1 motif element. Disordered stretches follow at residues E342–R367 and E457–M487.

Belongs to the type I cytokine receptor family. Type 4 subfamily. Heterodimer with the common gamma subunit. Associates with JAK1. C-mannosylated at Trp-214 in the WSXWS motif, the sugar chain makes extensive hydrogen bonds with Asn-73 sugar, and bridges the two fibronectin domains transforming the V-shaped receptor into an A-frame. Selectively expressed in lymphoid tissues. Most highly expressed in thymus and spleen.

Its subcellular location is the membrane. In terms of biological role, this is a receptor for interleukin-21. This is Interleukin-21 receptor (IL21R) from Homo sapiens (Human).